The primary structure comprises 166 residues: Urease accessory protein UreE (166 aa).

It belongs to the UreE family.

The protein resides in the cytoplasm. Involved in urease metallocenter assembly. Binds nickel. Probably functions as a nickel donor during metallocenter assembly. The sequence is that of Urease accessory protein UreE from Azotobacter vinelandii (strain DJ / ATCC BAA-1303).